The primary structure comprises 616 residues: Auxin efflux carrier component 4 (616 aa).

At 1 to 7 (MITWHDL) the chain is on the extracellular side. A helical transmembrane segment spans residues 8–28 (YTVLTAVVPLYVAMILAYGSV). Residues 29–38 (QWWKIFSPDQ) are Cytoplasmic-facing. A helical transmembrane segment spans residues 39 to 59 (CSGINRFVAIFAVPLLSFHFI). Valine 51 contacts (indol-3-yl)acetate. Residues 60 to 70 (STNDPYAMNFR) lie on the Extracellular side of the membrane. A helical transmembrane segment spans residues 71–91 (FVAADTLQKIIMLVLLALWAN). At 92–101 (LTKNGSLEWM) the chain is on the cytoplasmic side. A helical transmembrane segment spans residues 102–122 (ITIFSLSTLPNTLVMGIPLLI). Positions 112 and 114 each coordinate (indol-3-yl)acetate. Residues 123 to 131 (AMYGTYAGS) lie on the Extracellular side of the membrane. The chain crosses the membrane as a helical span at residues 132–152 (LMVQVVVLQCIIWYTLLLFLF). Residue tyrosine 145 coordinates (indol-3-yl)acetate. The Cytoplasmic portion of the chain corresponds to 153-476 (EYRGAKLLIM…LIRNPNTYSS (324 aa)). 3 positions are modified to phosphoserine: serine 223, serine 240, and serine 280. Positions 302 to 343 (AAGSYPAPNPEFSTGTGVSTKPNKIPKENQQQLQEKDSKASH) are disordered. Over residues 312–334 (EFSTGTGVSTKPNKIPKENQQQL) the composition is skewed to polar residues. A phosphoserine mark is found at serine 358 and serine 395. Residues 390–411 (DQPRKSNARGGGDDIGGLDSGE) form a disordered region. A compositionally biased stretch (gly residues) spans 398–409 (RGGGDDIGGLDS). Residues 477 to 497 (LIGLIWALVAYRWHVAMPKIL) form a helical membrane-spanning segment. The Extracellular segment spans residues 498–500 (QQS). Residues 501-521 (ISILSDAGLGMAMFSLGLFMA) traverse the membrane as a helical segment. Topologically, residues 522–535 (LQPKIIACGNSVAT) are cytoplasmic. The helical transmembrane segment at 536–556 (FAMAVRFITGPAIMAVAGIAI) threads the bilayer. Topologically, residues 557–561 (GLHGD) are extracellular. A helical membrane pass occupies residues 562–582 (LLRIAIVQAALPQGIVPFVFA). Positions 576 and 577 each coordinate (indol-3-yl)acetate. Topologically, residues 583–595 (KEYNVHPTILSTG) are cytoplasmic. A helical membrane pass occupies residues 596–616 (VIFGMLIALPITLVYYILLGL).

Belongs to the auxin efflux carrier (TC 2.A.69.1) family. Homodimer. In terms of tissue distribution, expressed in the quiescent center precursors and surrounding cells. Present in columella cells of primary roots. Detected in pollen.

The protein resides in the cell membrane. Its function is as follows. Acts as a component of the auxin efflux carrier. Plays a role in generating a sink for auxin into columella cells. Maintains the endogenous auxin gradient, which is essential for correct root patterning. Involved in EXO70A3-regulated gravitropic responses in columella cells and in root system architecture (RSA). Together with PIN3 and PIN7, involved in the connective auxin transport (CAT) that ensures communication across the shoot system, and modulates strigolactone-mediated shoot branching control. The abcb19 pin3 pin4 pin7 quadruple mutant exhibits an additive phenotype on strigolactone-mediated bud outgrowth responses and shoot branching control. In Arabidopsis thaliana (Mouse-ear cress), this protein is Auxin efflux carrier component 4.